The chain runs to 206 residues: Thymidylate kinase (206 aa).

14-21 contributes to the ATP binding site; that stretch reads GGEGIGKS.

It belongs to the thymidylate kinase family.

It carries out the reaction dTMP + ATP = dTDP + ADP. Phosphorylation of dTMP to form dTDP in both de novo and salvage pathways of dTTP synthesis. This chain is Thymidylate kinase, found in Rickettsia bellii (strain RML369-C).